Here is a 513-residue protein sequence, read N- to C-terminus: Glutamate--tRNA ligase 2 (513 aa).

The short motif at 11–21 (PSPTGFLHIGS) is the 'HIGH' region element. Positions 240 to 244 (KLSKR) match the 'KMSKS' region motif. Position 243 (K243) interacts with ATP. The RPE1 insert domain occupies 335–383 (NTLLRHLPYREEFGGNTERSTAAYIDIREDASTGLTYKLPLAVELPKKF).

Belongs to the class-I aminoacyl-tRNA synthetase family. Glutamate--tRNA ligase type 1 subfamily. Monomer.

It is found in the cytoplasm. The catalysed reaction is tRNA(Glu) + L-glutamate + ATP = L-glutamyl-tRNA(Glu) + AMP + diphosphate. Catalyzes the attachment of glutamate to tRNA(Glu) in a two-step reaction: glutamate is first activated by ATP to form Glu-AMP and then transferred to the acceptor end of tRNA(Glu). The sequence is that of Glutamate--tRNA ligase 2 from Rickettsia conorii (strain ATCC VR-613 / Malish 7).